The chain runs to 122 residues: Ribonuclease P protein component (122 aa).

It belongs to the RnpA family. Consists of a catalytic RNA component (M1 or rnpB) and a protein subunit.

It catalyses the reaction Endonucleolytic cleavage of RNA, removing 5'-extranucleotides from tRNA precursor.. Its function is as follows. RNaseP catalyzes the removal of the 5'-leader sequence from pre-tRNA to produce the mature 5'-terminus. It can also cleave other RNA substrates such as 4.5S RNA. The protein component plays an auxiliary but essential role in vivo by binding to the 5'-leader sequence and broadening the substrate specificity of the ribozyme. This Lactobacillus johnsonii (strain CNCM I-12250 / La1 / NCC 533) protein is Ribonuclease P protein component.